The primary structure comprises 305 residues: Sulfate adenylyltransferase subunit 2 (305 aa).

Residues 283–305 (RQGRVIDHDQSASMEKKKQEGYF) form a disordered region.

This sequence belongs to the PAPS reductase family. CysD subfamily. As to quaternary structure, heterodimer composed of CysD, the smaller subunit, and CysN.

The catalysed reaction is sulfate + ATP + H(+) = adenosine 5'-phosphosulfate + diphosphate. It functions in the pathway sulfur metabolism; hydrogen sulfide biosynthesis; sulfite from sulfate: step 1/3. Its function is as follows. With CysN forms the ATP sulfurylase (ATPS) that catalyzes the adenylation of sulfate producing adenosine 5'-phosphosulfate (APS) and diphosphate, the first enzymatic step in sulfur assimilation pathway. APS synthesis involves the formation of a high-energy phosphoric-sulfuric acid anhydride bond driven by GTP hydrolysis by CysN coupled to ATP hydrolysis by CysD. This chain is Sulfate adenylyltransferase subunit 2, found in Caulobacter sp. (strain K31).